A 222-amino-acid polypeptide reads, in one-letter code: 7-cyano-7-deazaguanine synthase (222 aa).

9-19 contributes to the ATP binding site; the sequence is ISGGMDSALSA. Residues Cys188, Cys196, Cys199, and Cys202 each contribute to the Zn(2+) site.

The protein belongs to the QueC family. The cofactor is Zn(2+).

It carries out the reaction 7-carboxy-7-deazaguanine + NH4(+) + ATP = 7-cyano-7-deazaguanine + ADP + phosphate + H2O + H(+). The protein operates within purine metabolism; 7-cyano-7-deazaguanine biosynthesis. Functionally, catalyzes the ATP-dependent conversion of 7-carboxy-7-deazaguanine (CDG) to 7-cyano-7-deazaguanine (preQ(0)). In Sulfurovum sp. (strain NBC37-1), this protein is 7-cyano-7-deazaguanine synthase.